We begin with the raw amino-acid sequence, 205 residues long: Thiamine-phosphate synthase (205 aa).

Residues 37–41 (QVREK) and N69 each bind 4-amino-2-methyl-5-(diphosphooxymethyl)pyrimidine. Mg(2+)-binding residues include D70 and D89. S108 contacts 4-amino-2-methyl-5-(diphosphooxymethyl)pyrimidine. Position 134 to 136 (134 to 136 (TGS)) interacts with 2-[(2R,5Z)-2-carboxy-4-methylthiazol-5(2H)-ylidene]ethyl phosphate. Residue K137 participates in 4-amino-2-methyl-5-(diphosphooxymethyl)pyrimidine binding. 2-[(2R,5Z)-2-carboxy-4-methylthiazol-5(2H)-ylidene]ethyl phosphate-binding positions include G165 and 185 to 186 (IS).

This sequence belongs to the thiamine-phosphate synthase family. Mg(2+) serves as cofactor.

It carries out the reaction 2-[(2R,5Z)-2-carboxy-4-methylthiazol-5(2H)-ylidene]ethyl phosphate + 4-amino-2-methyl-5-(diphosphooxymethyl)pyrimidine + 2 H(+) = thiamine phosphate + CO2 + diphosphate. The catalysed reaction is 2-(2-carboxy-4-methylthiazol-5-yl)ethyl phosphate + 4-amino-2-methyl-5-(diphosphooxymethyl)pyrimidine + 2 H(+) = thiamine phosphate + CO2 + diphosphate. The enzyme catalyses 4-methyl-5-(2-phosphooxyethyl)-thiazole + 4-amino-2-methyl-5-(diphosphooxymethyl)pyrimidine + H(+) = thiamine phosphate + diphosphate. The protein operates within cofactor biosynthesis; thiamine diphosphate biosynthesis; thiamine phosphate from 4-amino-2-methyl-5-diphosphomethylpyrimidine and 4-methyl-5-(2-phosphoethyl)-thiazole: step 1/1. Its function is as follows. Condenses 4-methyl-5-(beta-hydroxyethyl)thiazole monophosphate (THZ-P) and 2-methyl-4-amino-5-hydroxymethyl pyrimidine pyrophosphate (HMP-PP) to form thiamine monophosphate (TMP). In Clostridium botulinum (strain 657 / Type Ba4), this protein is Thiamine-phosphate synthase.